Consider the following 423-residue polypeptide: Kynureninase (423 aa).

Residues leucine 105, serine 106, 133 to 136 (FPSD), aspartate 218, histidine 221, and tyrosine 243 contribute to the pyridoxal 5'-phosphate site. Lysine 244 is subject to N6-(pyridoxal phosphate)lysine. Residues tryptophan 273 and asparagine 301 each coordinate pyridoxal 5'-phosphate.

This sequence belongs to the kynureninase family. In terms of assembly, homodimer. Pyridoxal 5'-phosphate is required as a cofactor.

It catalyses the reaction L-kynurenine + H2O = anthranilate + L-alanine + H(+). The enzyme catalyses 3-hydroxy-L-kynurenine + H2O = 3-hydroxyanthranilate + L-alanine + H(+). It participates in amino-acid degradation; L-kynurenine degradation; L-alanine and anthranilate from L-kynurenine: step 1/1. It functions in the pathway cofactor biosynthesis; NAD(+) biosynthesis; quinolinate from L-kynurenine: step 2/3. Functionally, catalyzes the cleavage of L-kynurenine (L-Kyn) and L-3-hydroxykynurenine (L-3OHKyn) into anthranilic acid (AA) and 3-hydroxyanthranilic acid (3-OHAA), respectively. In Xanthomonas euvesicatoria pv. vesicatoria (strain 85-10) (Xanthomonas campestris pv. vesicatoria), this protein is Kynureninase.